A 147-amino-acid polypeptide reads, in one-letter code: Large ribosomal subunit protein bL9 (147 aa).

It belongs to the bacterial ribosomal protein bL9 family.

Its function is as follows. Binds to the 23S rRNA. This Clostridium botulinum (strain ATCC 19397 / Type A) protein is Large ribosomal subunit protein bL9.